The following is a 222-amino-acid chain: Probable GTP-binding protein EngB (222 aa).

The 195-residue stretch at 23 to 217 folds into the EngB-type G domain; that stretch reads NASEIVFLGR…REEIVKYTLG (195 aa). GTP contacts are provided by residues 31-38, 57-61, 82-85, 152-155, and 191-193; these read GRSNVGKS, GKTQL, DLPG, TKAD, and FSA. Mg(2+)-binding residues include Ser38 and Thr59.

Belongs to the TRAFAC class TrmE-Era-EngA-EngB-Septin-like GTPase superfamily. EngB GTPase family. Mg(2+) serves as cofactor.

Necessary for normal cell division and for the maintenance of normal septation. The chain is Probable GTP-binding protein EngB from Helicobacter hepaticus (strain ATCC 51449 / 3B1).